The following is a 122-amino-acid chain: MRAPLLLMLLALGSALRSPQPPEARAKLCGHHLVRTLVRVCGGPRWSPEATQPVETRDRELLQWLEQRHLLHALVADVDPALDPQLPRQASQRQRRSAATNAVHRCCLTGCTQQDLLGLCPH.

Residues 1 to 15 form the signal peptide; it reads MRAPLLLMLLALGSA. 3 disulfide bridges follow: Cys29/Cys107, Cys41/Cys120, and Cys106/Cys111.

This sequence belongs to the insulin family. In terms of assembly, heterodimer of a B chain and an A chain linked by two disulfide bonds. As to expression, expressed exclusively in Leydig cells of the testis.

The protein resides in the secreted. Seems to play a role in testicular function. May be a trophic hormone with a role in testicular descent in fetal life. Is a ligand for LGR8 receptor. The protein is Insulin-like 3 (Insl3) of Mus musculus (Mouse).